A 792-amino-acid polypeptide reads, in one-letter code: Chloride channel protein CLC-d (792 aa).

12 helical membrane-spanning segments follow: residues 78–98 (FFSL…NLSV), 119–139 (AGFI…AYII), 170–190 (RTLI…LALG), 195–215 (LVHT…TKYH), 237–257 (GCAA…LFAL), 267–287 (QLMW…RTAM), 320–340 (LLPM…FNQL), 361–381 (IIEA…LPLL), 451–471 (LLTF…TAVP), 474–494 (QFVP…MFVV), 508–528 (ALLG…SLCV), and 529–549 (IMVE…VLLI). 2 consecutive CBS domains span residues 592–652 (QSQK…KVDF) and 704–761 (LNPS…SSAV). A helical transmembrane segment spans residues 731 to 751 (HLFVVPRPSRVIGLITRKDLL).

The protein belongs to the chloride channel (TC 2.A.49) family. As to quaternary structure, homodimer. Broadly expressed in the plant, but predominantly in the silique.

It localises to the membrane. Its function is as follows. Voltage-gated chloride channel. The protein is Chloride channel protein CLC-d (CLC-D) of Arabidopsis thaliana (Mouse-ear cress).